The primary structure comprises 887 residues: Kinesin-like protein KIF20A (887 aa).

At serine 2 the chain carries N-acetylserine. 3 positions are modified to phosphoserine: serine 7, serine 14, and serine 21. The Kinesin motor domain maps to 63–506 (KVKVYLRIRP…AKFSALASQL (444 aa)). 159 to 166 (GVTNSGKT) contacts ATP. Serine 527 is subject to Phosphoserine; by PLK1. The disordered stretch occupies residues 527-553 (SPQVGPGLEKEDKADSDLEDSPEDEAD). Over residues 543–553 (DLEDSPEDEAD) the composition is skewed to acidic residues. Residues 559–804 (KEELLQVVEA…VLVKLDLQKK (246 aa)) adopt a coiled-coil conformation. Phosphoserine is present on residues serine 683 and serine 823. Positions 805 to 887 (AACIAEQYHT…LLKSPFGKKY (83 aa)) are globular. Residues 826–875 (KRLGANQENQQPNHQPPGKKPFLRNLLPRTPTCQSSTDSSPYARILRSRH) form a disordered region. Threonine 855 carries the phosphothreonine modification. Residues 856–865 (PTCQSSTDSS) are compositionally biased toward polar residues. A phosphoserine mark is found at serine 865, serine 876, and serine 881.

Belongs to the TRAFAC class myosin-kinesin ATPase superfamily. Kinesin family. In terms of processing, phosphorylated by PLK1 at Ser-527 during mitosis, creating a docking site for PLK1 and recruiting PLK1 at central spindle. In terms of tissue distribution, ubiquitously expressed, with highest levels in spleen and testis.

Its subcellular location is the golgi apparatus. The protein resides in the cytoplasm. It is found in the cytoskeleton. It localises to the spindle. Functionally, mitotic kinesin required for chromosome passenger complex (CPC)-mediated cytokinesis. Following phosphorylation by PLK1, involved in recruitment of PLK1 to the central spindle. Interacts with guanosine triphosphate (GTP)-bound forms of RAB6A and RAB6B. May act as a motor required for the retrograde RAB6 regulated transport of Golgi membranes and associated vesicles along microtubules. Has a microtubule plus end-directed motility. This is Kinesin-like protein KIF20A (Kif20a) from Mus musculus (Mouse).